We begin with the raw amino-acid sequence, 51 residues long: Large ribosomal subunit protein eL39 (51 aa).

It belongs to the eukaryotic ribosomal protein eL39 family.

In Hyperthermus butylicus (strain DSM 5456 / JCM 9403 / PLM1-5), this protein is Large ribosomal subunit protein eL39.